The sequence spans 185 residues: ATP synthase subunit b 2 (185 aa).

The disordered stretch occupies residues 1 to 26 (MAQGHGDAKGTTAHTEAGGGHKAPFP). The chain crosses the membrane as a helical span at residues 37–57 (LVSLAIAFVALYLIVSKIALP).

The protein belongs to the ATPase B chain family. In terms of assembly, F-type ATPases have 2 components, F(1) - the catalytic core - and F(0) - the membrane proton channel. F(1) has five subunits: alpha(3), beta(3), gamma(1), delta(1), epsilon(1). F(0) has three main subunits: a(1), b(2) and c(10-14). The alpha and beta chains form an alternating ring which encloses part of the gamma chain. F(1) is attached to F(0) by a central stalk formed by the gamma and epsilon chains, while a peripheral stalk is formed by the delta and b chains.

Its subcellular location is the cell inner membrane. Its function is as follows. F(1)F(0) ATP synthase produces ATP from ADP in the presence of a proton or sodium gradient. F-type ATPases consist of two structural domains, F(1) containing the extramembraneous catalytic core and F(0) containing the membrane proton channel, linked together by a central stalk and a peripheral stalk. During catalysis, ATP synthesis in the catalytic domain of F(1) is coupled via a rotary mechanism of the central stalk subunits to proton translocation. In terms of biological role, component of the F(0) channel, it forms part of the peripheral stalk, linking F(1) to F(0). The b'-subunit is a diverged and duplicated form of b found in plants and photosynthetic bacteria. This chain is ATP synthase subunit b 2 (atpF2), found in Rhodopseudomonas palustris (strain ATCC BAA-98 / CGA009).